A 98-amino-acid polypeptide reads, in one-letter code: Protein FAM24A (98 aa).

Residues 1 to 29 (MFDLRTKVMIGIASTLLIAAIVLITVVFC) form the signal peptide.

The protein belongs to the FAM24 family.

It localises to the secreted. In Rattus norvegicus (Rat), this protein is Protein FAM24A (Fam24a).